Consider the following 739-residue polypeptide: tRNA 5-methylaminomethyl-2-thiouridine biosynthesis bifunctional protein MnmC (739 aa).

The tract at residues Met1 to Leu282 is tRNA (mnm(5)s(2)U34)-methyltransferase. Residues Ile330 to Ser739 are FAD-dependent cmnm(5)s(2)U34 oxidoreductase.

In the N-terminal section; belongs to the methyltransferase superfamily. tRNA (mnm(5)s(2)U34)-methyltransferase family. This sequence in the C-terminal section; belongs to the DAO family. It depends on FAD as a cofactor.

It is found in the cytoplasm. It carries out the reaction 5-aminomethyl-2-thiouridine(34) in tRNA + S-adenosyl-L-methionine = 5-methylaminomethyl-2-thiouridine(34) in tRNA + S-adenosyl-L-homocysteine + H(+). Catalyzes the last two steps in the biosynthesis of 5-methylaminomethyl-2-thiouridine (mnm(5)s(2)U) at the wobble position (U34) in tRNA. Catalyzes the FAD-dependent demodification of cmnm(5)s(2)U34 to nm(5)s(2)U34, followed by the transfer of a methyl group from S-adenosyl-L-methionine to nm(5)s(2)U34, to form mnm(5)s(2)U34. This chain is tRNA 5-methylaminomethyl-2-thiouridine biosynthesis bifunctional protein MnmC, found in Psychrobacter sp. (strain PRwf-1).